Reading from the N-terminus, the 388-residue chain is Succinate--CoA ligase [ADP-forming] subunit beta (388 aa).

An ATP-grasp domain is found at 9 to 245; the sequence is KELLKSYGLP…KSQENERELK (237 aa). ATP-binding positions include lysine 46, 53–55, glutamate 100, tyrosine 103, and glutamate 108; that span reads GRG. Positions 200 and 214 each coordinate Mg(2+). Residues asparagine 265 and 322–324 each bind substrate; that span reads GIV.

This sequence belongs to the succinate/malate CoA ligase beta subunit family. Heterotetramer of two alpha and two beta subunits. Mg(2+) serves as cofactor.

The catalysed reaction is succinate + ATP + CoA = succinyl-CoA + ADP + phosphate. It catalyses the reaction GTP + succinate + CoA = succinyl-CoA + GDP + phosphate. Its pathway is carbohydrate metabolism; tricarboxylic acid cycle; succinate from succinyl-CoA (ligase route): step 1/1. Its function is as follows. Succinyl-CoA synthetase functions in the citric acid cycle (TCA), coupling the hydrolysis of succinyl-CoA to the synthesis of either ATP or GTP and thus represents the only step of substrate-level phosphorylation in the TCA. The beta subunit provides nucleotide specificity of the enzyme and binds the substrate succinate, while the binding sites for coenzyme A and phosphate are found in the alpha subunit. The chain is Succinate--CoA ligase [ADP-forming] subunit beta from Psychrobacter arcticus (strain DSM 17307 / VKM B-2377 / 273-4).